Here is a 663-residue protein sequence, read N- to C-terminus: Pyoverdine export ATP-binding/permease protein PvdT (663 aa).

The 240-residue stretch at 11 to 250 folds into the ABC transporter domain; sequence IELRDIRKRY…PSAGVERHLQ (240 aa). 48-55 lines the ATP pocket; it reads GASGSGKS. The next 4 helical transmembrane spans lie at 292–312, 545–565, 598–618, and 626–646; these read ALTL…LAVG, IAAI…LMTV, VVGG…LLLG, and LSAI…FGFM.

Belongs to the ABC transporter superfamily. Macrolide exporter (TC 3.A.1.122) family. Part of the tripartite efflux system PvdRT-OpmQ, which is composed of an inner membrane component with both ATPase and permease domains, PvdT, a periplasmic membrane fusion protein, PvdR, and an outer membrane component, OpmQ.

The protein resides in the cell inner membrane. Part of the tripartite efflux system PvdRT-OpmQ required for the secretion into the extracellular milieu of the siderophore pyoverdine (PVD), which is involved in iron acquisition. This subunit binds PVD and drives its secretion by hydrolyzing ATP. The system is responsible for export of newly synthesized PVD after the final steps of biosynthesis have taken place in the periplasm. It is also responsible for recycling of PVD after internalization of ferri-PVD into the periplasm by the outer-membrane receptor FpvA and release of iron from PVD, thus making PVD available for new cycles of iron uptake. In addition, can expel unwanted metals complexed with PVD from the periplasm into the extracellular medium. The polypeptide is Pyoverdine export ATP-binding/permease protein PvdT (Pseudomonas aeruginosa (strain ATCC 15692 / DSM 22644 / CIP 104116 / JCM 14847 / LMG 12228 / 1C / PRS 101 / PAO1)).